Reading from the N-terminus, the 131-residue chain is D-ribose pyranase (131 aa).

The active-site Proton donor is the H20. Substrate contacts are provided by residues D28, H98, and 120-122; that span reads YSN.

The protein belongs to the RbsD / FucU family. RbsD subfamily. Homodecamer.

It localises to the cytoplasm. It catalyses the reaction beta-D-ribopyranose = beta-D-ribofuranose. It functions in the pathway carbohydrate metabolism; D-ribose degradation; D-ribose 5-phosphate from beta-D-ribopyranose: step 1/2. Catalyzes the interconversion of beta-pyran and beta-furan forms of D-ribose. This chain is D-ribose pyranase, found in Lactiplantibacillus plantarum (strain ATCC BAA-793 / NCIMB 8826 / WCFS1) (Lactobacillus plantarum).